The primary structure comprises 453 residues: MPHWAAVIMAAGKGTRMKSKLPKVMHTLAGKPMLQHVLDCVRSVEIPRSMVVLGHGREQIEATLDDRTEVVVQEEQCGTGHAIMQAIPHCHEVDHIIVLSGDQPLIRPETLRNLVRIHIEHNAAATLLTACFENPHGLGRILKEGDQFLRVVEEKDATPEERLIQEINTGTYCFNVAKLREALKNITPKNAQGEYYLTDVFAVFHAQGEVIRTYCTEDVHEALGINSRAQLAAAEDVARQRILSYWMEEGVTIIDPRSTFIEAGVVLQPDVVLQPFTILKGRTQVAEDAVIGPHTTLTDCTVGAGSEVSHTVGNQAVIGGHCTIGPYAYLRPGTVLQDKVKVGDFVEIKNSQIGEGSKIPHLSYVGDSQVGKSVNIGAGTITCNYDGVNKYKTIIRDKAFLGSNTNLVAPVEIGEGSVTGAGSTISKNVPANTLAIERSTQKHIENWVRNKKK.

Residues 1-228 form a pyrophosphorylase region; sequence MPHWAAVIMA…VHEALGINSR (228 aa). Residues Lys23, Gln73, 78-79, 100-102, Gly139, Glu153, Asn168, and Asn226 each bind UDP-N-acetyl-alpha-D-glucosamine; these read GT and SGD. Residue Asp102 participates in Mg(2+) binding. Position 226 (Asn226) interacts with Mg(2+). Positions 229 to 249 are linker; sequence AQLAAAEDVARQRILSYWMEE. The N-acetyltransferase stretch occupies residues 250–453; the sequence is GVTIIDPRST…IENWVRNKKK (204 aa). Residues Arg331 and Lys349 each coordinate UDP-N-acetyl-alpha-D-glucosamine. The active-site Proton acceptor is His361. Residues Tyr364 and Asn375 each coordinate UDP-N-acetyl-alpha-D-glucosamine. Acetyl-CoA is bound by residues Ala378, 384–385, Ser403, Ala421, and Arg438; that span reads NY.

This sequence in the N-terminal section; belongs to the N-acetylglucosamine-1-phosphate uridyltransferase family. It in the C-terminal section; belongs to the transferase hexapeptide repeat family. In terms of assembly, homotrimer. Mg(2+) is required as a cofactor.

It localises to the cytoplasm. It carries out the reaction alpha-D-glucosamine 1-phosphate + acetyl-CoA = N-acetyl-alpha-D-glucosamine 1-phosphate + CoA + H(+). The catalysed reaction is N-acetyl-alpha-D-glucosamine 1-phosphate + UTP + H(+) = UDP-N-acetyl-alpha-D-glucosamine + diphosphate. The protein operates within nucleotide-sugar biosynthesis; UDP-N-acetyl-alpha-D-glucosamine biosynthesis; N-acetyl-alpha-D-glucosamine 1-phosphate from alpha-D-glucosamine 6-phosphate (route II): step 2/2. It participates in nucleotide-sugar biosynthesis; UDP-N-acetyl-alpha-D-glucosamine biosynthesis; UDP-N-acetyl-alpha-D-glucosamine from N-acetyl-alpha-D-glucosamine 1-phosphate: step 1/1. It functions in the pathway bacterial outer membrane biogenesis; LPS lipid A biosynthesis. Its function is as follows. Catalyzes the last two sequential reactions in the de novo biosynthetic pathway for UDP-N-acetylglucosamine (UDP-GlcNAc). The C-terminal domain catalyzes the transfer of acetyl group from acetyl coenzyme A to glucosamine-1-phosphate (GlcN-1-P) to produce N-acetylglucosamine-1-phosphate (GlcNAc-1-P), which is converted into UDP-GlcNAc by the transfer of uridine 5-monophosphate (from uridine 5-triphosphate), a reaction catalyzed by the N-terminal domain. This chain is Bifunctional protein GlmU, found in Desulfitobacterium hafniense (strain DSM 10664 / DCB-2).